Consider the following 137-residue polypeptide: Small ribosomal subunit protein uS9 (137 aa).

The interval 114–137 (DSRMKERKKPGLRGARRGVQFSKR) is disordered. Basic residues predominate over residues 118–137 (KERKKPGLRGARRGVQFSKR).

It belongs to the universal ribosomal protein uS9 family.

The chain is Small ribosomal subunit protein uS9 from Rhodopirellula baltica (strain DSM 10527 / NCIMB 13988 / SH1).